The following is a 340-amino-acid chain: Ferrochelatase (340 aa).

Residues His-189 and Glu-292 each contribute to the Fe cation site.

It belongs to the ferrochelatase family.

Its subcellular location is the cytoplasm. It catalyses the reaction heme b + 2 H(+) = protoporphyrin IX + Fe(2+). It participates in porphyrin-containing compound metabolism; protoheme biosynthesis; protoheme from protoporphyrin-IX: step 1/1. Its function is as follows. Catalyzes the ferrous insertion into protoporphyrin IX. This is Ferrochelatase from Ectopseudomonas mendocina (strain ymp) (Pseudomonas mendocina).